The following is a 369-amino-acid chain: Methionine import ATP-binding protein MetN 1 (369 aa).

The segment at 1-26 is disordered; it reads MTTMTVPPSLLPLEPFPTAPDTRAST. Residues 29-265 enclose the ABC transporter domain; it reads IRLHGLGKRY…PRHAVTRSLL (237 aa). 62-69 provides a ligand contact to ATP; the sequence is GRSGAGKS.

Belongs to the ABC transporter superfamily. Methionine importer (TC 3.A.1.24) family. The complex is composed of two ATP-binding proteins (MetN), two transmembrane proteins (MetI) and a solute-binding protein (MetQ).

It is found in the cell inner membrane. The enzyme catalyses L-methionine(out) + ATP + H2O = L-methionine(in) + ADP + phosphate + H(+). The catalysed reaction is D-methionine(out) + ATP + H2O = D-methionine(in) + ADP + phosphate + H(+). Part of the ABC transporter complex MetNIQ involved in methionine import. Responsible for energy coupling to the transport system. This chain is Methionine import ATP-binding protein MetN 1, found in Pseudomonas aeruginosa (strain UCBPP-PA14).